The primary structure comprises 218 residues: MSLHHIANRTKKLPPLRVGIGGPVGSGKTTLLEMLCKAMKDKYDLVAITNDIYTKEDQRLLTVSGALDAERIMGVETGGCPHTAIREDASINLEAIDRMLVEFPDADVVFIESGGDNLAATFSPELSDLTIYVIDVAAGEKIPRKGGPGITKSDLFVINKTDLAPYVGADLGVMQLDTIRMRTTAKGLKPFVMTNLKTNTGLAEVVAFIETKGMLQPA.

Residue 22–29 (GPVGSGKT) participates in GTP binding.

Belongs to the SIMIBI class G3E GTPase family. UreG subfamily. Homodimer. UreD, UreF and UreG form a complex that acts as a GTP-hydrolysis-dependent molecular chaperone, activating the urease apoprotein by helping to assemble the nickel containing metallocenter of UreC. The UreE protein probably delivers the nickel.

It localises to the cytoplasm. Facilitates the functional incorporation of the urease nickel metallocenter. This process requires GTP hydrolysis, probably effectuated by UreG. In Polaromonas naphthalenivorans (strain CJ2), this protein is Urease accessory protein UreG.